A 739-amino-acid chain; its full sequence is Nucleoprotein (739 aa).

The stretch at 334 to 363 (VNVGEQYQQLREAATEAEKQLQQYAESREL) forms a coiled coil. Disordered stretches follow at residues 414 to 475 (RPNL…YHDD) and 493 to 641 (DDNK…DIGQ). The segment covering 531–546 (SDNNQQSADSEEQGGQ) has biased composition (polar residues). Positions 570 to 579 (TLMDQGDDDP) are enriched in acidic residues. A compositionally biased stretch (basic and acidic residues) spans 614 to 624 (AEAHEPPHKSS). The segment covering 625 to 634 (NEPAETSQLN) has biased composition (polar residues).

The protein belongs to the filoviruses nucleoprotein family. As to quaternary structure, homooligomer. Homomultimerizes to form the nucleocapsid. Binds to viral genomic RNA. Interacts with VP35 and VP30 to form the nucleocapsid. Interacts with host PPP2R5C; this interaction leads to VP30 dephosphorylation and viral transcription. Interacts with VP24; this interaction facilitates nucleocapsid assembly and genome packaging. Interacts with matrix protein VP40; this interaction allows recruitment of the nucleocapsid into progeny virions. Interacts with host STAU1. Interacts with host NXF1 (via RNA-binding domain); this interaction recruits NXF1 to the inclusion bodies were viral replication takes place, probably to export viral mRNA-NXF1 complexes from these sites. Interacts with host CCDC92; this interaction sequesters NP in the host cytoplasm. Interacts with host TRIM14. Phosphorylated and O-glycosylated by host. Acetylated by host EP300 in vitro.

The protein resides in the virion. Its subcellular location is the host cytoplasm. Functionally, oligomerizes into helical capsid to encapsidate the viral genome, protecting it from nucleases and the cellular innate immune response. VP35 binds to and stabilizes monomeric NP, keeping it soluble. Upon virus replication, NP is recruited to bind cooperatively viral genomic RNA and VP35 is released. The encapsidated genomic RNA is termed the nucleocapsid and serves as template for transcription and replication. The nucleocapsid is helical with a pitch of 10.81 NP per turn and a diameter of about 22nm. Each NP binds to six nucleotides of viral genomic RNA, three being exposed to the solvant and three hidden into the nucleocapsid. Also recruits host PPP2R5C phosphatase to dephosphorylate VP30 and thereby promote viral transcription. Upon virion assembly and budding, NP binds to VP24 and possibly host STAU1. This Reston ebolavirus (strain Reston-89) (REBOV) protein is Nucleoprotein (NP).